The following is a 408-amino-acid chain: Bifunctional enzyme IspD/IspF (408 aa).

The segment at 1 to 247 is 2-C-methyl-D-erythritol 4-phosphate cytidylyltransferase; it reads MNAPFEKDRR…GPAMTELPDI (247 aa). The tract at residues 248–408 is 2-C-methyl-D-erythritol 2,4-cyclodiphosphate synthase; the sequence is RVGNGYDVHG…TVAYPGSLGN (161 aa). Residues D254 and H256 each contribute to the a divalent metal cation site. 4-CDP-2-C-methyl-D-erythritol 2-phosphate contacts are provided by residues 254 to 256 and 280 to 281; these read DVH and HS. Position 288 (H288) interacts with a divalent metal cation. Residues 302-304, 378-381, F385, and R388 each bind 4-CDP-2-C-methyl-D-erythritol 2-phosphate; these read DIG and TTNE.

It in the N-terminal section; belongs to the IspD/TarI cytidylyltransferase family. IspD subfamily. This sequence in the C-terminal section; belongs to the IspF family. Requires a divalent metal cation as cofactor.

It catalyses the reaction 2-C-methyl-D-erythritol 4-phosphate + CTP + H(+) = 4-CDP-2-C-methyl-D-erythritol + diphosphate. It carries out the reaction 4-CDP-2-C-methyl-D-erythritol 2-phosphate = 2-C-methyl-D-erythritol 2,4-cyclic diphosphate + CMP. Its pathway is isoprenoid biosynthesis; isopentenyl diphosphate biosynthesis via DXP pathway; isopentenyl diphosphate from 1-deoxy-D-xylulose 5-phosphate: step 2/6. The protein operates within isoprenoid biosynthesis; isopentenyl diphosphate biosynthesis via DXP pathway; isopentenyl diphosphate from 1-deoxy-D-xylulose 5-phosphate: step 4/6. Functionally, bifunctional enzyme that catalyzes the formation of 4-diphosphocytidyl-2-C-methyl-D-erythritol from CTP and 2-C-methyl-D-erythritol 4-phosphate (MEP) (IspD), and catalyzes the conversion of 4-diphosphocytidyl-2-C-methyl-D-erythritol 2-phosphate (CDP-ME2P) to 2-C-methyl-D-erythritol 2,4-cyclodiphosphate (ME-CPP) with a corresponding release of cytidine 5-monophosphate (CMP) (IspF). The polypeptide is Bifunctional enzyme IspD/IspF (Chelativorans sp. (strain BNC1)).